Reading from the N-terminus, the 320-residue chain is MGDIPAVGLSCWKASPGKVTEAVKVAIDAGYRHFNCAYFYHNEKEVGAGIRYKIKEGAVRREDLFIASKLWCTCHKKSLVKTACRRSLKALKLNYLDLYLIHWPMGFKPPHPEWIMSCSELSFCLSHPGVHDLPLDESDMVIPGDTDFLDTWEAMEDLVITGLVKNIGVSNFNHEQLERLLNKPGLRFKPVTNQIECHPYLTQKNLISFCQSRGVSVTAYRPLGGSCEGVDLIDDPVIQRIAKEHSKSPAQILIRFQTQRNVIVIPGSITPSHIKENIQVFDFELTQHDMDNILSLDRNLRLATFPITKNHKDYPFHIEY.

The active-site Proton donor is Tyr-40. Substrate is bound at residue His-102. NADP(+) is bound by residues Gln-194 and 265-277 (IPGSITPSHIKEN).

The protein belongs to the aldo/keto reductase family. As to quaternary structure, monomer.

The protein resides in the cytoplasm. It carries out the reaction 1,5-anhydro-D-glucitol + NADP(+) = 1,5-anhydro-D-fructose + NADPH + H(+). Its activity is regulated as follows. Inhibited by p-chloromercuribenzoic acid and alkyliodines. In terms of biological role, catalyzes the NADPH-dependent reduction of 1,5-anhydro-D-fructose (AF) to 1,5-anhydro-D-glucitol. This is 1,5-anhydro-D-fructose reductase (AKR1E2) from Macaca fascicularis (Crab-eating macaque).